The following is an 88-amino-acid chain: Small ribosomal subunit protein uS17 (88 aa).

The protein belongs to the universal ribosomal protein uS17 family. In terms of assembly, part of the 30S ribosomal subunit.

One of the primary rRNA binding proteins, it binds specifically to the 5'-end of 16S ribosomal RNA. The sequence is that of Small ribosomal subunit protein uS17 from Prochlorococcus marinus (strain SARG / CCMP1375 / SS120).